A 278-amino-acid polypeptide reads, in one-letter code: Indole-3-glycerol phosphate synthase (278 aa).

The protein belongs to the TrpC family.

The enzyme catalyses 1-(2-carboxyphenylamino)-1-deoxy-D-ribulose 5-phosphate + H(+) = (1S,2R)-1-C-(indol-3-yl)glycerol 3-phosphate + CO2 + H2O. It participates in amino-acid biosynthesis; L-tryptophan biosynthesis; L-tryptophan from chorismate: step 4/5. The chain is Indole-3-glycerol phosphate synthase from Pseudomonas aeruginosa (strain LESB58).